The primary structure comprises 20 residues: KDGYLVGNDGCKYSCNTYPK.

An LCN-type CS-alpha/beta domain is found at 1-20 (KDGYLVGNDGCKYSCNTYPK).

The protein belongs to the long (4 C-C) scorpion toxin superfamily. Sodium channel inhibitor family. Beta subfamily. As to expression, expressed by the venom gland.

The protein resides in the secreted. In terms of biological role, beta toxins bind voltage-independently at site-4 of sodium channels (Nav) and shift the voltage of activation toward more negative potentials thereby affecting sodium channel activation and promoting spontaneous and repetitive firing. This is Toxin TpF21-Cocle from Tityus pachyurus (Colombian scorpion).